A 656-amino-acid chain; its full sequence is Protein NO VEIN-LIKE (656 aa).

Residues 283 to 375 are disordered; the sequence is DKDYCGKHTR…HVKQKIPKSA (93 aa). Residues 299–308 are compositionally biased toward acidic residues; it reads EENDSADYEV. Positions 342–353 are enriched in basic and acidic residues; sequence ESRNHEKSDSPK. A compositionally biased stretch (basic residues) spans 354–371; it reads LLRRGPSKLRRGHVKQKI.

The chain is Protein NO VEIN-LIKE from Arabidopsis thaliana (Mouse-ear cress).